The sequence spans 123 residues: Loki profilin-3 (123 aa).

It belongs to the Asgard profilin family.

It is found in the cytoplasm. It localises to the cytoskeleton. Its function is as follows. Binds to actin and affects the structure of the cytoskeleton. At high concentrations inhibits spontaneous rabbit actin nucleation. This strongly suggests this archaea has a profilin-regulated actin system, and actin-type genes can be identified in this organism. The chain is Loki profilin-3 from Lokiarchaeum sp. (strain GC14_75).